We begin with the raw amino-acid sequence, 118 residues long: Holo-[acyl-carrier-protein] synthase (118 aa).

Mg(2+) contacts are provided by aspartate 9 and glutamate 52.

Belongs to the P-Pant transferase superfamily. AcpS family. It depends on Mg(2+) as a cofactor.

It localises to the cytoplasm. The enzyme catalyses apo-[ACP] + CoA = holo-[ACP] + adenosine 3',5'-bisphosphate + H(+). Transfers the 4'-phosphopantetheine moiety from coenzyme A to a Ser of acyl-carrier-protein. The polypeptide is Holo-[acyl-carrier-protein] synthase (Frankia casuarinae (strain DSM 45818 / CECT 9043 / HFP020203 / CcI3)).